Here is a 297-residue protein sequence, read N- to C-terminus: MDAPLGFVVIDKPSGLTSHACVSRMRRVLQTKRVGHGGTLDPAVTGVLPIAVGQATRLLPYLPGEKTYRGVIQLGTSTSTDDLQGEIVAVQNWPDLSVEEMDQALNPFRGTIEQCPPQVSAVHVNGERAYARARRGEVIDLPARPVTIHSLSLEHWDFEQGKLTLEVHCSAGTYIRSLARDLGQALGCGGCLDSLRRTQALGFVEAHAIALPVHPNEQSGPSLEPLTLIPPQLALKHLPIRTLSELERDDWSCGRTIPHQNGDGPTVVLSEDNIMLGIGLANSEAQLRPKVVFEARG.

Aspartate 41 acts as the Nucleophile in catalysis.

The protein belongs to the pseudouridine synthase TruB family. Type 1 subfamily.

It carries out the reaction uridine(55) in tRNA = pseudouridine(55) in tRNA. In terms of biological role, responsible for synthesis of pseudouridine from uracil-55 in the psi GC loop of transfer RNAs. The protein is tRNA pseudouridine synthase B of Synechococcus sp. (strain CC9311).